A 212-amino-acid chain; its full sequence is Sentrin-specific protease 8 (212 aa).

The residue at position 1 (methionine 1) is an N-acetylmethionine. The protease stretch occupies residues 11–174; sequence SLLRQSDVSL…MYVICNTEAL (164 aa). Catalysis depends on residues histidine 102 and aspartate 119. The Nucleophile role is filled by cysteine 163.

It belongs to the peptidase C48 family. Broadly expressed, with highest levels in kidney and pancreas.

Protease that catalyzes two essential functions in the NEDD8 pathway: processing of full-length NEDD8 to its mature form and deconjugation of NEDD8 from targeted proteins such as cullins or p53. The chain is Sentrin-specific protease 8 (SENP8) from Homo sapiens (Human).